We begin with the raw amino-acid sequence, 60 residues long: Large ribosomal subunit protein uL30 (60 aa).

Belongs to the universal ribosomal protein uL30 family. Part of the 50S ribosomal subunit.

The sequence is that of Large ribosomal subunit protein uL30 from Streptococcus suis (strain 98HAH33).